The sequence spans 572 residues: Proline--tRNA ligase (572 aa).

This sequence belongs to the class-II aminoacyl-tRNA synthetase family. ProS type 1 subfamily. As to quaternary structure, homodimer.

The protein resides in the cytoplasm. It carries out the reaction tRNA(Pro) + L-proline + ATP = L-prolyl-tRNA(Pro) + AMP + diphosphate. Its function is as follows. Catalyzes the attachment of proline to tRNA(Pro) in a two-step reaction: proline is first activated by ATP to form Pro-AMP and then transferred to the acceptor end of tRNA(Pro). As ProRS can inadvertently accommodate and process non-cognate amino acids such as alanine and cysteine, to avoid such errors it has two additional distinct editing activities against alanine. One activity is designated as 'pretransfer' editing and involves the tRNA(Pro)-independent hydrolysis of activated Ala-AMP. The other activity is designated 'posttransfer' editing and involves deacylation of mischarged Ala-tRNA(Pro). The misacylated Cys-tRNA(Pro) is not edited by ProRS. The chain is Proline--tRNA ligase from Yersinia pestis bv. Antiqua (strain Antiqua).